Reading from the N-terminus, the 71-residue chain is Omega-conotoxin-like Ac6.4 (71 aa).

Residues 1 to 22 form the signal peptide; it reads MKLTCVVIVAVLLLTACQLLTA. Residues 23–45 constitute a propeptide that is removed on maturation; sequence DDSRGTQKHRALRSDTKLSMSTR. Intrachain disulfides connect Cys-46–Cys-61, Cys-53–Cys-65, and Cys-60–Cys-70. Cys-70 carries the post-translational modification Cysteine amide.

The protein belongs to the conotoxin O1 superfamily. In terms of tissue distribution, expressed by the venom duct.

The protein localises to the secreted. In terms of biological role, omega-conotoxins act at presynaptic membranes, they bind and block voltage-gated calcium channels (Cav). The polypeptide is Omega-conotoxin-like Ac6.4 (Conus achatinus (Little frog cone)).